A 547-amino-acid polypeptide reads, in one-letter code: CTP synthase (547 aa).

Residues 1–265 (MARYVFITGG…DQAVLDAFGI (265 aa)) form an amidoligase domain region. Serine 13 lines the CTP pocket. Serine 13 serves as a coordination point for UTP. Residues 14-19 (SLGKGL) and aspartate 71 each bind ATP. 2 residues coordinate Mg(2+): aspartate 71 and glutamate 139. Residues 146 to 148 (DIE), 186 to 191 (KTKPTQ), and lysine 222 each bind CTP. UTP is bound by residues 186–191 (KTKPTQ) and lysine 222. Residues 291–546 (RVAIVGKYTQ…IRAAVEVSRL (256 aa)) form the Glutamine amidotransferase type-1 domain. Glycine 353 contacts L-glutamine. The Nucleophile; for glutamine hydrolysis role is filled by cysteine 380. L-glutamine contacts are provided by residues 381–384 (LGMQ), glutamate 404, and arginine 474. Catalysis depends on residues histidine 519 and glutamate 521.

Belongs to the CTP synthase family. As to quaternary structure, homotetramer.

The catalysed reaction is UTP + L-glutamine + ATP + H2O = CTP + L-glutamate + ADP + phosphate + 2 H(+). The enzyme catalyses L-glutamine + H2O = L-glutamate + NH4(+). It catalyses the reaction UTP + NH4(+) + ATP = CTP + ADP + phosphate + 2 H(+). Its pathway is pyrimidine metabolism; CTP biosynthesis via de novo pathway; CTP from UDP: step 2/2. Its activity is regulated as follows. Allosterically activated by GTP, when glutamine is the substrate; GTP has no effect on the reaction when ammonia is the substrate. The allosteric effector GTP functions by stabilizing the protein conformation that binds the tetrahedral intermediate(s) formed during glutamine hydrolysis. Inhibited by the product CTP, via allosteric rather than competitive inhibition. Functionally, catalyzes the ATP-dependent amination of UTP to CTP with either L-glutamine or ammonia as the source of nitrogen. Regulates intracellular CTP levels through interactions with the four ribonucleotide triphosphates. The sequence is that of CTP synthase from Cereibacter sphaeroides (strain ATCC 17025 / ATH 2.4.3) (Rhodobacter sphaeroides).